The primary structure comprises 105 residues: Large ribosomal subunit protein uL24 (105 aa).

The protein belongs to the universal ribosomal protein uL24 family. In terms of assembly, part of the 50S ribosomal subunit.

One of two assembly initiator proteins, it binds directly to the 5'-end of the 23S rRNA, where it nucleates assembly of the 50S subunit. Its function is as follows. One of the proteins that surrounds the polypeptide exit tunnel on the outside of the subunit. This is Large ribosomal subunit protein uL24 from Sorangium cellulosum (strain So ce56) (Polyangium cellulosum (strain So ce56)).